The sequence spans 329 residues: Carrier protein YMC2, mitochondrial (329 aa).

Residues 1–27 (MSEEFPTPQLLDELEDQQKVTTPNEKR) form a disordered region. A mitochondrion-targeting transit peptide spans 1–33 (MSEEFPTPQLLDELEDQQKVTTPNEKRELSSNR). 3 Solcar repeats span residues 34–115 (VLKD…MKRF), 143–226 (SQYY…LVAR), and 238–325 (PPWK…VMRF). 6 consecutive transmembrane segments (helical) span residues 38 to 58 (IFAGTIGGIAQVLVGQPFDTT), 84 to 104 (VFAFYKGALTPLLGVGICVSV), 140 to 160 (LPLSQYYVCGLTGGVVNSFLA), 205 to 225 (TMIRAGHGLGTYFLVYEALVA), 243 to 263 (CLFGAFSGTMLWLTVYPLDVV), and 297 to 318 (FFKGFGPTMVRSAPVNGATFLT).

Belongs to the mitochondrial carrier (TC 2.A.29) family.

The protein localises to the mitochondrion inner membrane. This is Carrier protein YMC2, mitochondrial (YMC2) from Saccharomyces cerevisiae (strain ATCC 204508 / S288c) (Baker's yeast).